Here is a 224-residue protein sequence, read N- to C-terminus: Small ribosomal subunit protein uS5 (224 aa).

The tract at residues methionine 1–lysine 38 is disordered. The segment covering glutamate 13–lysine 38 has biased composition (basic and acidic residues). Positions tyrosine 41–valine 104 constitute an S5 DRBM domain.

Belongs to the universal ribosomal protein uS5 family. Part of the 30S ribosomal subunit. Contacts proteins S4 and S8.

In terms of biological role, with S4 and S12 plays an important role in translational accuracy. Located at the back of the 30S subunit body where it stabilizes the conformation of the head with respect to the body. The chain is Small ribosomal subunit protein uS5 from Mycobacterium ulcerans (strain Agy99).